A 298-amino-acid polypeptide reads, in one-letter code: MTEQAISFAKDFLAGGIAAAISKTAVAPIERVKLLLQVQHASKQIAADKQYKGIVDCIVRIPKEQGVLSFWRGNLANVIRYFPTQALNFAFKDKYKQIFLGGVDKRTQFWRYFAGNLASGGAAGATSLCFVYPLDFARTRLAADVGKSGSEREFRGLGDCLVKITKSDGIRGLYQGFNVSVQGIIIYRAAYFGIYDTAKGMLPDPKNTHIVVSWMIAQTVTAVAGVVSYPFDTVRRRMMMQSGRKGADIMYKGTVDCWRKILKDEGGKAFFKGAWSNVLRGMGGAFVLVLYDELKKVI.

Residue M1 is modified to N-acetylmethionine. The Mitochondrial intermembrane segment spans residues 1–7 (MTEQAIS). At T2 the chain carries N-acetylthreonine; in ADP/ATP translocase 3, N-terminally processed. A Solcar 1 repeat occupies 6-98 (ISFAKDFLAG…FAFKDKYKQI (93 aa)). Residues 8 to 37 (FAKDFLAGGIAAAISKTAVAPIERVKLLLQ) form a helical membrane-spanning segment. The Mitochondrial matrix portion of the chain corresponds to 38–74 (VQHASKQIAADKQYKGIVDCIVRIPKEQGVLSFWRGN). K52 is modified (N6,N6,N6-trimethyllysine). Residues 75 to 99 (LANVIRYFPTQALNFAFKDKYKQIF) form a helical membrane-spanning segment. The ADP site is built by R80 and K92. Residues 100–109 (LGGVDKRTQF) are Mitochondrial intermembrane-facing. Position 105 is an N6-acetyllysine (K105). The chain crosses the membrane as a helical span at residues 110–130 (WRYFAGNLASGGAAGATSLCF). Solcar repeat units lie at residues 111 to 201 (RYFA…AKGM) and 212 to 297 (VSWM…LKKV). Residues 131–178 (VYPLDFARTRLAADVGKSGSEREFRGLGDCLVKITKSDGIRGLYQGFN) lie on the Mitochondrial matrix side of the membrane. The chain crosses the membrane as a helical span at residues 179–199 (VSVQGIIIYRAAYFGIYDTAK). Topologically, residues 200 to 210 (GMLPDPKNTHI) are mitochondrial intermembrane. Residues 211–231 (VVSWMIAQTVTAVAGVVSYPF) traverse the membrane as a helical segment. Residues 232–273 (DTVRRRMMMQSGRKGADIMYKGTVDCWRKILKDEGGKAFFKG) lie on the Mitochondrial matrix side of the membrane. R235 provides a ligand contact to ADP. Residues 235 to 240 (RRRMMM) form an important for transport activity region. The Nucleotide carrier signature motif signature appears at 235–240 (RRRMMM). K268 carries the N6-acetyllysine modification. The chain crosses the membrane as a helical span at residues 274–291 (AWSNVLRGMGGAFVLVLY). Topologically, residues 292–298 (DELKKVI) are mitochondrial intermembrane.

It belongs to the mitochondrial carrier (TC 2.A.29) family. In terms of assembly, monomer. Found in a complex with ARL2, ARL2BP and SLC25A6/ANT3. In terms of processing, trimethylated by ANTKMT at Lys-52.

Its subcellular location is the mitochondrion inner membrane. The protein localises to the membrane. It catalyses the reaction ADP(in) + ATP(out) = ADP(out) + ATP(in). The enzyme catalyses H(+)(in) = H(+)(out). With respect to regulation, the matrix-open state (m-state) is inhibited by the membrane-permeable bongkrekic acid (BKA). The cytoplasmic-open state (c-state) is inhibited by the membrane-impermeable toxic inhibitor carboxyatractyloside (CATR). Proton transporter activity is inhibited by ADP:ATP antiporter activity. Its function is as follows. ADP:ATP antiporter that mediates import of ADP into the mitochondrial matrix for ATP synthesis, and export of ATP out to fuel the cell. Cycles between the cytoplasmic-open state (c-state) and the matrix-open state (m-state): operates by the alternating access mechanism with a single substrate-binding site intermittently exposed to either the cytosolic (c-state) or matrix (m-state) side of the inner mitochondrial membrane. In addition to its ADP:ATP antiporter activity, also involved in mitochondrial uncoupling and mitochondrial permeability transition pore (mPTP) activity. Plays a role in mitochondrial uncoupling by acting as a proton transporter: proton transport uncouples the proton flows via the electron transport chain and ATP synthase to reduce the efficiency of ATP production and cause mitochondrial thermogenesis. Proton transporter activity is inhibited by ADP:ATP antiporter activity, suggesting that SLC25A6/ANT3 acts as a master regulator of mitochondrial energy output by maintaining a delicate balance between ATP production (ADP:ATP antiporter activity) and thermogenesis (proton transporter activity). Proton transporter activity requires free fatty acids as cofactor, but does not transport it. Also plays a key role in mPTP opening, a non-specific pore that enables free passage of the mitochondrial membranes to solutes of up to 1.5 kDa, and which contributes to cell death. It is however unclear if SLC25A6/ANT3 constitutes a pore-forming component of mPTP or regulates it. The protein is ADP/ATP translocase 3 of Bos taurus (Bovine).